The following is a 77-amino-acid chain: Conotoxin Vc6c (77 aa).

An N-terminal signal peptide occupies residues 1–22; the sequence is MKLTCMVIVAVLFLTANTFVTA. The propeptide occupies 23–51; that stretch reads DDSGNGLENLFSKAHHEIKNPEASNLNKR. Disulfide bonds link cysteine 52-cysteine 67, cysteine 59-cysteine 71, and cysteine 66-cysteine 76.

As to expression, expressed by the venom duct.

Its subcellular location is the secreted. This chain is Conotoxin Vc6c, found in Conus victoriae (Queen Victoria cone).